The following is a 133-amino-acid chain: DQDCLPGWSFYEGHCYKVFNLDKTWEDAEKFCTEQANSGHLVSIDSKKEANFVAELVSQNIKETRRTDFVWIGLRAEDKRQHCSSEWSDGSSINYQNWIEAESKKCLGLEKQTRYRKWVNLNCGQPYRFTCEI.

3 disulfides stabilise this stretch: cysteine 4–cysteine 15, cysteine 32–cysteine 131, and cysteine 106–cysteine 123. One can recognise a C-type lectin domain in the interval 11–132; that stretch reads YEGHCYKVFN…CGQPYRFTCE (122 aa).

The protein belongs to the snaclec family. Heterodimer; disulfide-linked. Expressed by the venom gland.

It is found in the secreted. Interferes with one step of hemostasis (modulation of platelet aggregation, or coagulation cascade, for example). The chain is Snaclec A9 from Macrovipera lebetinus (Levantine viper).